The following is a 744-amino-acid chain: Polyribonucleotide nucleotidyltransferase (744 aa).

Positions 515 and 521 each coordinate Mg(2+). The 60-residue stretch at 581–640 (PRVITVQVPVDKIGEVIGPKGKMINQIQDDTGADISIEDDGTVFIGATDGPSAEAARQAI) folds into the KH domain. In terms of domain architecture, S1 motif spans 652-724 (GERFVGTVVK…PRGKLSLHAV (73 aa)).

This sequence belongs to the polyribonucleotide nucleotidyltransferase family. Mg(2+) is required as a cofactor.

It is found in the cytoplasm. It carries out the reaction RNA(n+1) + phosphate = RNA(n) + a ribonucleoside 5'-diphosphate. In terms of biological role, involved in mRNA degradation. Catalyzes the phosphorolysis of single-stranded polyribonucleotides processively in the 3'- to 5'-direction. This is Polyribonucleotide nucleotidyltransferase from Beutenbergia cavernae (strain ATCC BAA-8 / DSM 12333 / CCUG 43141 / JCM 11478 / NBRC 16432 / NCIMB 13614 / HKI 0122).